The primary structure comprises 212 residues: Histone H1.2 (212 aa).

Positions 1-17 (MSEAAPAAPAAAPPAEK) are enriched in low complexity. The interval 1–41 (MSEAAPAAPAAAPPAEKAPAKKKAAKKPAGVRRKASGPPVS) is disordered. An N-acetylserine modification is found at serine 2. Serine 2 is modified (phosphoserine). Lysine 17 carries the N6-acetyllysine modification. Residues 20–35 (AKKKAAKKPAGVRRKA) show a composition bias toward basic residues. N6-(2-hydroxyisobutyryl)lysine occurs at positions 23, 26, and 27. N6-(beta-hydroxybutyryl)lysine; alternate is present on lysine 34. Lysine 34 is modified (N6-crotonyllysine; alternate). At lysine 34 the chain carries N6-methyllysine; alternate. In terms of domain architecture, H15 spans 36-109 (SGPPVSELIT…GASGSFKLNK (74 aa)). Residue lysine 46 is modified to N6-(2-hydroxyisobutyryl)lysine. Residue lysine 52 is modified to N6-(beta-hydroxybutyryl)lysine; alternate. Lysine 52 carries the post-translational modification N6-(2-hydroxyisobutyryl)lysine; alternate. A Citrulline modification is found at arginine 54. Lysine 63 bears the N6-(2-hydroxyisobutyryl)lysine mark. Lysine 64 carries the N6-(beta-hydroxybutyryl)lysine; alternate modification. An N6-crotonyllysine; alternate modification is found at lysine 64. Lysine 64 is subject to N6-(2-hydroxyisobutyryl)lysine; alternate. 2 positions are modified to N6-(2-hydroxyisobutyryl)lysine: lysine 75 and lysine 81. An N6-(beta-hydroxybutyryl)lysine; alternate mark is found at lysine 85 and lysine 90. N6-crotonyllysine; alternate occurs at positions 85, 90, and 97. An N6-(2-hydroxyisobutyryl)lysine; alternate mark is found at lysine 85, lysine 90, and lysine 97. N6-succinyllysine; alternate is present on lysine 97. The segment at 98–212 (GTGASGSFKL…KAKKVAAKKK (115 aa)) is disordered. Serine 104 carries the post-translational modification Phosphoserine; by PKC. The residue at position 106 (lysine 106) is an N6-(beta-hydroxybutyryl)lysine. Residues lysine 110, lysine 117, lysine 121, lysine 129, and lysine 136 each carry the N6-(2-hydroxyisobutyryl)lysine modification. The segment covering 121–148 (KKAGAAKAKKPAGAAKKPKKATGAATPK) has biased composition (low complexity). Residue threonine 146 is modified to Phosphothreonine. Lysine 148 is modified (N6-(2-hydroxyisobutyryl)lysine). The segment covering 149–160 (KAAKKTPKKAKK) has biased composition (basic residues). Residues lysine 159 and lysine 168 each carry the N6-crotonyllysine; alternate modification. Lysine 159 and lysine 168 each carry N6-(2-hydroxyisobutyryl)lysine; alternate. Residues 169–212 (KVAKSPKKAKVTKPKKVKSASKAVKPKAAKPKVAKAKKVAAKKK) show a composition bias toward basic residues. Lysine 186 carries the N6-methyllysine; by EHMT1 and EHMT2 modification. Position 187 is an ADP-ribosylserine (serine 187). Lysine 212 carries the N6-(2-hydroxyisobutyryl)lysine modification.

It belongs to the histone H1/H5 family. As to quaternary structure, interacts with TSC22D1 isoform 2. H1 histones are progressively phosphorylated during the cell cycle, becoming maximally phosphorylated during late G2 phase and M phase, and being dephosphorylated sharply thereafter. In terms of processing, crotonylation (Kcr) is specifically present in male germ cells and marks testis-specific genes in post-meiotic cells, including X-linked genes that escape sex chromosome inactivation in haploid cells. Crotonylation marks active promoters and enhancers and confers resistance to transcriptional repressors. It is also associated with post-meiotically activated genes on autosomes. Post-translationally, ADP-ribosylated on Ser-187 in response to DNA damage. Citrullination at Arg-54 (H1R54ci) by PADI4 takes place within the DNA-binding site of H1 and results in its displacement from chromatin and global chromatin decondensation, thereby promoting pluripotency and stem cell maintenance. In terms of processing, hydroxybutyrylation of histones is induced by starvation.

It is found in the nucleus. The protein localises to the chromosome. Its function is as follows. Histone H1 protein binds to linker DNA between nucleosomes forming the macromolecular structure known as the chromatin fiber. Histones H1 are necessary for the condensation of nucleosome chains into higher-order structured fibers. Also acts as a regulator of individual gene transcription through chromatin remodeling, nucleosome spacing and DNA methylation. The polypeptide is Histone H1.2 (Mus musculus (Mouse)).